We begin with the raw amino-acid sequence, 389 residues long: MMISEIRQELTDHIIPFWNKLRDDENGGFYGYLSYGLELDKKADKGVILHSRILWFYSNAYMTLGGDELLDNAKHAYEFIKNNCIDYEYGGVYWMMDFEGKPADTMKHTYNIAFAIYALSSYYRASGDKEALALAYRLFEDIEKNTLDEYGYREAFDRQWRLVDNEALSENGLKADKTMNAILHLIEAYTELYKADGNEKVADRLKFQLGQMRDIVYTPDTNALKVFFDTAFNLVGDIHSYGHDIEATWLMDRACDVLGDEDLKKQFAEMDLKISHNIQDIALEDGALNNERDKNEIDKTRVWWVQAEAVVGFINAYQHSGDEKFLESAKSVWENIKEYIIDKREGGEWYSEVTFDHTPHDYKETVGPWKCPYHNGRMCMEVITRGVDI.

This sequence belongs to the cellobiose 2-epimerase family.

It catalyses the reaction D-cellobiose = beta-D-glucosyl-(1-&gt;4)-D-mannopyranose. Catalyzes the reversible epimerization of cellobiose to 4-O-beta-D-glucopyranosyl-D-mannose (Glc-Man). The chain is Cellobiose 2-epimerase from Ruminococcus albus (strain ATCC 27210 / DSM 20455 / JCM 14654 / NCDO 2250 / 7).